A 336-amino-acid chain; its full sequence is ATP-dependent 6-phosphofructokinase (336 aa).

Glycine 11 serves as a coordination point for ATP. 21-25 (RAVVR) is a binding site for ADP. Residues 72–73 (RY) and 102–105 (GDGS) each bind ATP. Position 103 (aspartate 103) interacts with Mg(2+). 125 to 127 (TID) is a substrate binding site. Aspartate 127 serves as the catalytic Proton acceptor. Arginine 154 provides a ligand contact to ADP. Substrate-binding positions include arginine 162 and 169–171 (MGR). ADP-binding positions include 185–187 (GAD), lysine 211, and 213–215 (KKH). Substrate is bound by residues glutamate 222, arginine 244, and 250–253 (HIQR).

This sequence belongs to the phosphofructokinase type A (PFKA) family. ATP-dependent PFK group I subfamily. Prokaryotic clade 'B1' sub-subfamily. As to quaternary structure, homotetramer. The cofactor is Mg(2+).

The protein resides in the cytoplasm. It catalyses the reaction beta-D-fructose 6-phosphate + ATP = beta-D-fructose 1,6-bisphosphate + ADP + H(+). Its pathway is carbohydrate degradation; glycolysis; D-glyceraldehyde 3-phosphate and glycerone phosphate from D-glucose: step 3/4. With respect to regulation, allosterically activated by ADP and other diphosphonucleosides, and allosterically inhibited by phosphoenolpyruvate. In terms of biological role, catalyzes the phosphorylation of D-fructose 6-phosphate to fructose 1,6-bisphosphate by ATP, the first committing step of glycolysis. This chain is ATP-dependent 6-phosphofructokinase, found in Streptococcus suis (strain 05ZYH33).